Here is a 154-residue protein sequence, read N- to C-terminus: SsrA-binding protein (154 aa).

The protein belongs to the SmpB family.

Its subcellular location is the cytoplasm. Functionally, required for rescue of stalled ribosomes mediated by trans-translation. Binds to transfer-messenger RNA (tmRNA), required for stable association of tmRNA with ribosomes. tmRNA and SmpB together mimic tRNA shape, replacing the anticodon stem-loop with SmpB. tmRNA is encoded by the ssrA gene; the 2 termini fold to resemble tRNA(Ala) and it encodes a 'tag peptide', a short internal open reading frame. During trans-translation Ala-aminoacylated tmRNA acts like a tRNA, entering the A-site of stalled ribosomes, displacing the stalled mRNA. The ribosome then switches to translate the ORF on the tmRNA; the nascent peptide is terminated with the 'tag peptide' encoded by the tmRNA and targeted for degradation. The ribosome is freed to recommence translation, which seems to be the essential function of trans-translation. The sequence is that of SsrA-binding protein from Treponema denticola (strain ATCC 35405 / DSM 14222 / CIP 103919 / JCM 8153 / KCTC 15104).